The sequence spans 107 residues: Prepilin peptidase-dependent protein C (107 aa).

Residues 1 to 10 (MSASLKNQQG) constitute a propeptide that is removed on maturation. At Phe-11 the chain carries N-methylphenylalanine. Residues 11 to 30 (FSLPEVMLAMVLMVMIVTAL) traverse the membrane as a helical segment.

It localises to the membrane. Functionally, not yet known. In Escherichia coli (strain K12), this protein is Prepilin peptidase-dependent protein C (ppdC).